The following is a 512-amino-acid chain: Alpha-1B-glycoprotein (512 aa).

Positions 1 to 18 (MSLLATVLLLWGFTLGPG) are cleaved as a signal peptide. Ig-like V-type domains lie at 22–126 (MLDS…VTGK), 127–219 (EPLP…MYAS), 220–312 (QAPP…PVEL), 313–415 (MWSD…LRVN), and 416–512 (GPPP…IVEG). Residues N44, N89, and N192 are each glycosylated (N-linked (GlcNAc...) asparagine). Cystine bridges form between C49-C96, C153-C195, C245-C292, C343-C392, and C441-C488. N-linked (GlcNAc...) asparagine glycosylation is found at N369, N381, N389, and N485.

As to quaternary structure, interacts with CRISP3. As to expression, expressed in the liver hepatocytes of male and female GH transgenic mice and in the liver of female, but not of male, non-transgenic mice.

Its subcellular location is the secreted. The chain is Alpha-1B-glycoprotein (A1bg) from Mus musculus (Mouse).